A 289-amino-acid polypeptide reads, in one-letter code: uncharacterized protein (289 aa).

9 consecutive transmembrane segments (helical) span residues 13-32 (INFAYPIPLLSLLAFMLSGS), 37-59 (LIISYIFAFSFFTAANLWNHLND), 80-99 (IVTEFVVAFYFVSFLLIFFI), 104-121 (EIALLLTGLSVVLTWLYS), 141-160 (VFTYILCSFSFPLSFWTIFS), 165-183 (VGVVFTLATGFTYLSGFFL), 203-225 (VLSPSTLLIISVMLFIASTFVVI), 235-252 (TSSLLVLTVYPPILFAIY), and 265-287 (IISSLKIYTYSYLGFLIAFAIGC).

Its subcellular location is the cell membrane. This is an uncharacterized protein from Archaeoglobus fulgidus (strain ATCC 49558 / DSM 4304 / JCM 9628 / NBRC 100126 / VC-16).